The chain runs to 124 residues: MARINQLVRKPRRARAKKSDVPALEGCPQRRGVCTRVYTTTPKKPNSALRKVARVRITNGAEVTAYIGGEGHNLQEHSVVLIRGGRVKDLPGVRYHIVRGSLDTAGVSGRRRGRSKYGEKKPKE.

The tract at residues 1 to 25 (MARINQLVRKPRRARAKKSDVPALE) is disordered. Aspartate 89 carries the 3-methylthioaspartic acid modification. Residues 103 to 124 (DTAGVSGRRRGRSKYGEKKPKE) are disordered.

It belongs to the universal ribosomal protein uS12 family. As to quaternary structure, part of the 30S ribosomal subunit. Contacts proteins S8 and S17. May interact with IF1 in the 30S initiation complex.

In terms of biological role, with S4 and S5 plays an important role in translational accuracy. Its function is as follows. Interacts with and stabilizes bases of the 16S rRNA that are involved in tRNA selection in the A site and with the mRNA backbone. Located at the interface of the 30S and 50S subunits, it traverses the body of the 30S subunit contacting proteins on the other side and probably holding the rRNA structure together. The combined cluster of proteins S8, S12 and S17 appears to hold together the shoulder and platform of the 30S subunit. The polypeptide is Small ribosomal subunit protein uS12 (Coxiella burnetii (strain Dugway 5J108-111)).